The primary structure comprises 451 residues: MFKTLYSRIAIYAITVILFSALMSFLFTNIYYHFHLKASNDAKIMRTLKEAREYERTQKPKPLDTYLKHLGQMNYQIMTVNEHGTKHFYGETFRKNTISQSAIKKVLNGEDYHGIKNKPYAFFVTGFFDNETDNTVGIQFKTDDGALAVFMRPDIGETFSEFRIFLAVLITLLLIISISLVIASTYSIIKPVTALKNATTRIMKGDFSTPIKQTRHDEIGTLQSRFNTMRQNLGQVDQMRQHFVQNVSHEVKTPLTHLQRLLTQLELTQNEEEKQLCINEMFEITNQVSELTKELLLLSELDNASHLTFNDNVHLNTLIKDIIRHEQFRTDEKDLVMFTELEDLYFRGNERLLHQAFNNLIINAMNYAPQNSMINITLTSTNHLIIFNIENDGSIAEEDAKHIFDRFYKLSDESSSNGLGLAITQSIIHLHHGSITLTSDDKTQFIVKLFI.

The next 2 membrane-spanning stretches (helical) occupy residues 9–29 (IAIYAITVILFSALMSFLFTN) and 164–184 (IFLAVLITLLLIISISLVIAS). In terms of domain architecture, HAMP spans 186 to 238 (YSIIKPVTALKNATTRIMKGDFSTPIKQTRHDEIGTLQSRFNTMRQNLGQVDQ). The region spanning 246-451 (NVSHEVKTPL…KTQFIVKLFI (206 aa)) is the Histidine kinase domain. Histidine 249 is modified (phosphohistidine; by autocatalysis).

In terms of processing, autophosphorylated.

It is found in the cell membrane. It catalyses the reaction ATP + protein L-histidine = ADP + protein N-phospho-L-histidine.. Member of the two-component regulatory system HssS/HssR involved in intracellular heme homeostasis and tempering of staphylococcal virulence. HssS functions as a heme sensor histidine kinase which is autophosphorylated at a histidine residue and transfers its phosphate group to an aspartate residue of HssR. HssR/HssS activates the expression of HrtAB, an efflux pump, in response to extracellular heme, hemin, hemoglobin or blood. The polypeptide is Heme sensor protein HssS (hssS) (Staphylococcus epidermidis (strain ATCC 35984 / DSM 28319 / BCRC 17069 / CCUG 31568 / BM 3577 / RP62A)).